Reading from the N-terminus, the 164-residue chain is Large ribosomal subunit protein uL11 (164 aa).

The protein belongs to the universal ribosomal protein uL11 family. As to quaternary structure, part of the ribosomal stalk of the 50S ribosomal subunit. Interacts with L10 and the large rRNA to form the base of the stalk. L10 forms an elongated spine to which L12 dimers bind in a sequential fashion forming a multimeric L10(L12)X complex.

Its function is as follows. Forms part of the ribosomal stalk which helps the ribosome interact with GTP-bound translation factors. This chain is Large ribosomal subunit protein uL11, found in Pyrococcus furiosus (strain ATCC 43587 / DSM 3638 / JCM 8422 / Vc1).